The primary structure comprises 352 residues: Vacuolar protein sorting-associated protein 37C (352 aa).

At Ser29 the chain carries Phosphoserine. The VPS37 C-terminal domain occupies 78-167; it reads VERCQEQKAK…RRPRALPELA (90 aa). The disordered stretch occupies residues 162-352; sequence ALPELAGDVP…HPPGPAWPRY (191 aa). Composition is skewed to pro residues over residues 173–185, 202–213, and 319–336; these read KRPP…PQAT, YPLPYSPSPGLP, and PGQP…PPGT.

Belongs to the VPS37 family. In terms of assembly, component of the ESCRT-I complex (endosomal sorting complex required for transport I) which consists of TSG101, VPS28, a VPS37 protein (VPS37A to -D) and MVB12A or MVB12B in a 1:1:1:1 stoichiometry. Interacts with TSG101, VPS28, MVB12A and MVB12B. Component of the ESCRT-I complex (endosomal sorting complex required for transport I) which consists of TSG101, VPS28, a VPS37 protein (VPS37A to -D) and UBAP1 in a 1:1:1:1 stoichiometry. Interacts with HGS and STAM2. Interacts with CEP55. Post-translationally, phosphorylated by TBK1.

The protein localises to the late endosome membrane. In terms of biological role, component of the ESCRT-I complex, a regulator of vesicular trafficking process. Required for the sorting of endocytic ubiquitinated cargos into multivesicular bodies. May be involved in cell growth and differentiation. This is Vacuolar protein sorting-associated protein 37C (Vps37c) from Mus musculus (Mouse).